Here is a 63-residue protein sequence, read N- to C-terminus: Keratin-associated protein 8-1 (63 aa).

The 12 X 2 AA repeats of G-[YCGS] stretch occupies residues Pro12 to Tyr54.

Belongs to the KRTAP type 8 family. As to quaternary structure, interacts with hair keratins. In terms of tissue distribution, is essentially restricted to only one vertical half of the hair forming compartment and in beard hairs is absent from the central medulla.

In the hair cortex, hair keratin intermediate filaments are embedded in an interfilamentous matrix, consisting of hair keratin-associated proteins (KRTAP), which are essential for the formation of a rigid and resistant hair shaft through their extensive disulfide bond cross-linking with abundant cysteine residues of hair keratins. The matrix proteins include the high-sulfur and high-glycine-tyrosine keratins. The polypeptide is Keratin-associated protein 8-1 (KRTAP8-1) (Homo sapiens (Human)).